The sequence spans 80 residues: Defensin-like protein 207 (80 aa).

The N-terminal stretch at 1–29 is a signal peptide; the sequence is MAKNLNSVSFIVLLLVLLVASTEILKSDA. 3 cysteine pairs are disulfide-bonded: C38-C64, C50-C75, and C54-C77.

Belongs to the DEFL family.

Its subcellular location is the secreted. This chain is Defensin-like protein 207, found in Arabidopsis thaliana (Mouse-ear cress).